We begin with the raw amino-acid sequence, 223 residues long: Deoxyribose-phosphate aldolase (223 aa).

Catalysis depends on D89, which acts as the Proton donor/acceptor. Residue K152 is the Schiff-base intermediate with acetaldehyde of the active site. K181 functions as the Proton donor/acceptor in the catalytic mechanism.

This sequence belongs to the DeoC/FbaB aldolase family. DeoC type 1 subfamily.

It is found in the cytoplasm. The enzyme catalyses 2-deoxy-D-ribose 5-phosphate = D-glyceraldehyde 3-phosphate + acetaldehyde. The protein operates within carbohydrate degradation; 2-deoxy-D-ribose 1-phosphate degradation; D-glyceraldehyde 3-phosphate and acetaldehyde from 2-deoxy-alpha-D-ribose 1-phosphate: step 2/2. Functionally, catalyzes a reversible aldol reaction between acetaldehyde and D-glyceraldehyde 3-phosphate to generate 2-deoxy-D-ribose 5-phosphate. The sequence is that of Deoxyribose-phosphate aldolase from Listeria monocytogenes serovar 1/2a (strain ATCC BAA-679 / EGD-e).